The following is a 396-amino-acid chain: Bifunctional enzyme Fae/Hps (396 aa).

Residues 1-161 are formaldehyde-activating enzyme; it reads MYQIGEALIG…YEKDRGVHAI (161 aa). The Proton donor role is filled by His17. The substrate site is built by Asp19, Leu48, Lys66, Thr68, and Gln83. Residues 162 to 396 are 3-hexulose-6-phosphate synthase; the sequence is MGYKITRLWD…IDQYRIMTDF (235 aa).

This sequence in the N-terminal section; belongs to the formaldehyde-activating enzyme family. The protein in the C-terminal section; belongs to the HPS/KGPDC family. HPS subfamily.

It carries out the reaction 5,6,7,8-tetrahydromethanopterin + formaldehyde = 5,10-methylenetetrahydromethanopterin + H2O. The enzyme catalyses D-ribulose 5-phosphate + formaldehyde = D-arabino-hex-3-ulose 6-phosphate. It participates in carbohydrate biosynthesis; D-ribose 5-phosphate biosynthesis. Its function is as follows. Catalyzes the condensation of formaldehyde with tetrahydromethanopterin (H(4)MPT) to 5,10-methylenetetrahydromethanopterin. Catalyzes the reversible formation of ribulose-5-phosphate and formaldehyde from 3-hexulose-6-phosphate. The sequence is that of Bifunctional enzyme Fae/Hps from Methanocella arvoryzae (strain DSM 22066 / NBRC 105507 / MRE50).